The primary structure comprises 131 residues: Small ribosomal subunit protein uS8 (131 aa).

It belongs to the universal ribosomal protein uS8 family. In terms of assembly, part of the 30S ribosomal subunit. Contacts proteins S5 and S12.

Its function is as follows. One of the primary rRNA binding proteins, it binds directly to 16S rRNA central domain where it helps coordinate assembly of the platform of the 30S subunit. This Bacteroides fragilis (strain ATCC 25285 / DSM 2151 / CCUG 4856 / JCM 11019 / LMG 10263 / NCTC 9343 / Onslow / VPI 2553 / EN-2) protein is Small ribosomal subunit protein uS8.